Here is a 219-residue protein sequence, read N- to C-terminus: Leukocyte surface antigen CD53 (219 aa).

Residues 1–11 (MGMSSLKLLKY) are Cytoplasmic-facing. A helical membrane pass occupies residues 12-32 (VLFIFNLLFWVCGCCILGFGI). Topologically, residues 33–54 (YFLVQNTYGVLFRNLPFLTLGN) are extracellular. Residues 55 to 69 (ILVIVGSIIMVVAFL) traverse the membrane as a helical segment. Over 70–80 (GCMGSIKENKC) the chain is Cytoplasmic. The helical transmembrane segment at 81–106 (LLMSFFVLLLIILLAEVTIAILLFVY) threads the bilayer. At 107–181 (EQKLNTLVAE…NKAKSWFHSN (75 aa)) the chain is on the extracellular side. N-linked (GlcNAc...) asparagine glycosylation is found at Asn-119, Asn-129, and Asn-148. Residues 182–206 (FLYIGIITICVCVIQVLGMSFALTL) traverse the membrane as a helical segment. At 207–219 (NCQIDKTSQALGL) the chain is on the cytoplasmic side.

The protein belongs to the tetraspanin (TM4SF) family. Interacts with SCIMP. Interacts with CD45/PTPRC. Interacts with IL7R. Interacts with RBL2 and PPP2CA.

Its subcellular location is the cell membrane. It is found in the cell junction. The protein resides in the membrane. Functionally, structural component of specialized membrane microdomains known as tetraspanin-enriched microdomains (TERMs), which act as platforms for receptor clustering and signaling. Participates thereby in diverse biological functions such as cell signal transduction, adhesion, migration and protein trafficking. Plays a role in the activation of monocytes and B-cells. Acts as an essential regulator of B-cell development by promoting interleukin-7 receptor/IL7R signaling. Also promotes, in B-cells, the BCR signaling by recruiting PKC to the plasma membrane in order to phosphorylate its substrates. Plays an essential role in lymphocyte homing to lymph nodes by stabilizing L-selectin/SELL cell surface expression. Also mediates metabolic and inflammatory functions in hepatocytes and adipose tissue by promoting TNF-alpha and LPS signaling independent of the immune compartment. Protects hematopoietic stem cell function in response to stress by facilitating DREAM complex activity through association with p130/RBL2 and its phosphatase PP2A. This Mus musculus (Mouse) protein is Leukocyte surface antigen CD53 (Cd53).